We begin with the raw amino-acid sequence, 430 residues long: MSETIISAEVVEKNNAARKPDLERDYASLGERLDRRGIAIDAIRAKVEKFAVAIPSWGVGTGGTRFARFPGAGEPRDIFDKIEDCAVISQLTQATPTVSLHIPWDKADPNRLKQAASRFGLGFDAMNSNTFSDARDQKLSYKFGSLSHADAGTRRQAVEHNLECIEIGKTLGSKALTVWIGDGSNFPGQVNFARAFERYLDAMKAVYAGLPADWKLFTEHKMYEPAFYSTVVQDWGTNYLIAKELGDRAFCLVDLGHHAPNVNIEMIVSRLIQFKKLGGFHFNDSKYGDDDLDAGSIDPYRLFLVFNELVDAELSGAEGFDPAHMLDQSHNVTDPIESLMLSAVEVQRAYAQALLVDRKALEGFQDGNDALMATQTLKAAYRTDVEPILAMARLKTGGAIDPVATYRAAGYRAKVAAERPAVTGGSGGIV.

Mn(2+)-binding residues include histidine 257, aspartate 289, and aspartate 291.

It belongs to the rhamnose isomerase family. Mn(2+) serves as cofactor.

The chain is Probable sugar isomerase mlr5709 from Mesorhizobium japonicum (strain LMG 29417 / CECT 9101 / MAFF 303099) (Mesorhizobium loti (strain MAFF 303099)).